A 118-amino-acid chain; its full sequence is Acidic phospholipase A2 PA-3 (118 aa).

7 cysteine pairs are disulfide-bonded: cysteine 11/cysteine 71, cysteine 27/cysteine 117, cysteine 29/cysteine 45, cysteine 44/cysteine 98, cysteine 51/cysteine 91, cysteine 60/cysteine 84, and cysteine 78/cysteine 89. Tyrosine 28, glycine 30, and glycine 32 together coordinate Ca(2+). Histidine 48 is an active-site residue. Ca(2+) is bound at residue aspartate 49. Aspartate 92 is a catalytic residue.

It belongs to the phospholipase A2 family. Group I subfamily. D49 sub-subfamily. Ca(2+) is required as a cofactor. Expressed by the venom gland.

The protein resides in the secreted. It carries out the reaction a 1,2-diacyl-sn-glycero-3-phosphocholine + H2O = a 1-acyl-sn-glycero-3-phosphocholine + a fatty acid + H(+). In terms of biological role, PLA2 catalyzes the calcium-dependent hydrolysis of the 2-acyl groups in 3-sn-phosphoglycerides. The protein is Acidic phospholipase A2 PA-3 of Pseudechis australis (Mulga snake).